The primary structure comprises 229 residues: Large ribosomal subunit protein uL1 (229 aa).

Belongs to the universal ribosomal protein uL1 family. In terms of assembly, part of the 50S ribosomal subunit.

Functionally, binds directly to 23S rRNA. The L1 stalk is quite mobile in the ribosome, and is involved in E site tRNA release. In terms of biological role, protein L1 is also a translational repressor protein, it controls the translation of the L11 operon by binding to its mRNA. In Haemophilus ducreyi (strain 35000HP / ATCC 700724), this protein is Large ribosomal subunit protein uL1.